A 309-amino-acid polypeptide reads, in one-letter code: Porphobilinogen deaminase (309 aa).

Cys-242 bears the S-(dipyrrolylmethanemethyl)cysteine mark.

The protein belongs to the HMBS family. In terms of assembly, monomer. The cofactor is dipyrromethane.

The catalysed reaction is 4 porphobilinogen + H2O = hydroxymethylbilane + 4 NH4(+). Its pathway is porphyrin-containing compound metabolism; protoporphyrin-IX biosynthesis; coproporphyrinogen-III from 5-aminolevulinate: step 2/4. Tetrapolymerization of the monopyrrole PBG into the hydroxymethylbilane pre-uroporphyrinogen in several discrete steps. This chain is Porphobilinogen deaminase, found in Hamiltonella defensa subsp. Acyrthosiphon pisum (strain 5AT).